Consider the following 855-residue polypeptide: Inactive rhomboid protein 1 (855 aa).

The disordered stretch occupies residues 1–35; sequence MSEARRDSTSSLQRKKPPWLKLDIPSAAPATAEEP. The Cytoplasmic portion of the chain corresponds to 1 to 411; it reads MSEARRDSTS…HRPFFTYWLT (411 aa). Residues 25–35 show a composition bias toward low complexity; it reads PSAAPATAEEP. A phosphoserine mark is found at Ser76 and Ser176. 2 positions are modified to phosphothreonine: Thr180 and Thr183. The residue at position 390 (Ser390) is a Phosphoserine. Residues 412-432 form a helical membrane-spanning segment; it reads FVHSLVTILAVCIYGIAPVGF. The Lumenal segment spans residues 433–655; that stretch reads SQHETVDSVL…NPEVPDQFYR (223 aa). A glycan (N-linked (GlcNAc...) asparagine) is linked at Asn583. The chain crosses the membrane as a helical span at residues 656–676; the sequence is LWLSLFLHAGILHCLVSICFQ. Residues 677-691 lie on the Cytoplasmic side of the membrane; it reads MTVLRDLEKLAGWHR. The helical transmembrane segment at 692–712 threads the bilayer; the sequence is IAIIYLLSGVTGNLASAIFLP. The Lumenal portion of the chain corresponds to 713-714; the sequence is YR. Residues 715 to 735 form a helical membrane-spanning segment; it reads AEVGPAGSQFGILACLFVELF. The Cytoplasmic portion of the chain corresponds to 736 to 746; it reads QSWQILARPWR. Residues 747–767 form a helical membrane-spanning segment; that stretch reads AFFKLLAVVLFLFTFGLLPWI. Over 768–772 the chain is Lumenal; that stretch reads DNFAH. The chain crosses the membrane as a helical span at residues 773–793; that stretch reads ISGFISGLFLSFAFLPYISFG. At 794 to 803 the chain is on the cytoplasmic side; the sequence is KFDLYRKRCQ. A helical membrane pass occupies residues 804–824; that stretch reads IIVFQVVFLGLLAGLVVLFYV. Residues 825-855 lie on the Lumenal side of the membrane; sequence YPVRCEWCEFLTCIPFTDKFCEKYELDAQLH.

This sequence belongs to the peptidase S54 family. As to quaternary structure, homodimer, or homooligomer. Interacts with TGFA and HBEGF. Interacts with EGF; may retain EGF in the endoplasmic reticulum and regulates its degradation through the endoplasmic reticulum-associated degradation (ERAD). Interacts (via cytoplasmic N-terminus) with FRMD8/iTAP; this interaction leads to mutual protein stabilization. Interacts with ADAM17/TACE.

It is found in the endoplasmic reticulum membrane. Its subcellular location is the golgi apparatus membrane. Its function is as follows. Regulates ADAM17 protease, a sheddase of the epidermal growth factor (EGF) receptor ligands and TNF, thereby plays a role in sleep, cell survival, proliferation, migration and inflammation. Does not exhibit any protease activity on its own. This is Inactive rhomboid protein 1 (RHBDF1) from Callithrix jacchus (White-tufted-ear marmoset).